Reading from the N-terminus, the 191-residue chain is tRNA-specific adenosine deaminase 2 (191 aa).

Residues 20–145 (EETEKWMEQA…SVLDIASADL (126 aa)) form the CMP/dCMP-type deaminase domain. Position 71 (histidine 71) interacts with Zn(2+). Residue glutamate 73 is the Proton donor of the active site. Zn(2+) contacts are provided by cysteine 107 and cysteine 110.

This sequence belongs to the cytidine and deoxycytidylate deaminase family. ADAT2 subfamily. Zn(2+) serves as cofactor.

The catalysed reaction is adenosine(34) in tRNA + H2O + H(+) = inosine(34) in tRNA + NH4(+). Functionally, probably participates in deamination of adenosine-34 to inosine in many tRNAs. In Bos taurus (Bovine), this protein is tRNA-specific adenosine deaminase 2 (DEADC1).